A 549-amino-acid chain; its full sequence is SET and MYND domain-containing protein DDB_G0277331 (549 aa).

The SET domain maps to 27–283 (KGIELRYCDG…KDEELFINYS (257 aa)). Residues Cys71, Cys74, Cys90, Cys93, Cys99, Cys103, His111, and Cys115 each contribute to the Zn(2+) site. The MYND-type zinc finger occupies 71–115 (CDECLKNKLDLEEGKTLKRCSNCKLVYYCSTDCQTKAWKIHKQEC). A coiled-coil region spans residues 340–401 (NINNNNNNNN…IIKNLQNKLS (62 aa)).

The protein belongs to the class V-like SAM-binding methyltransferase superfamily.

Its function is as follows. Probable methyltransferase. In Dictyostelium discoideum (Social amoeba), this protein is SET and MYND domain-containing protein DDB_G0277331.